Consider the following 398-residue polypeptide: Bifunctional enzyme IspD/IspF (398 aa).

Residues Met-1–Ile-234 are 2-C-methyl-D-erythritol 4-phosphate cytidylyltransferase. Residues Arg-235–Gly-398 are 2-C-methyl-D-erythritol 2,4-cyclodiphosphate synthase. Residues Asp-241 and His-243 each contribute to the a divalent metal cation site. 4-CDP-2-C-methyl-D-erythritol 2-phosphate is bound by residues Asp-241 to His-243 and His-267 to Ser-268. His-275 serves as a coordination point for a divalent metal cation. 4-CDP-2-C-methyl-D-erythritol 2-phosphate contacts are provided by residues Asp-289–Gly-291, Thr-365–Glu-368, Phe-372, and Arg-375.

In the N-terminal section; belongs to the IspD/TarI cytidylyltransferase family. IspD subfamily. This sequence in the C-terminal section; belongs to the IspF family. A divalent metal cation serves as cofactor.

It catalyses the reaction 2-C-methyl-D-erythritol 4-phosphate + CTP + H(+) = 4-CDP-2-C-methyl-D-erythritol + diphosphate. It carries out the reaction 4-CDP-2-C-methyl-D-erythritol 2-phosphate = 2-C-methyl-D-erythritol 2,4-cyclic diphosphate + CMP. The protein operates within isoprenoid biosynthesis; isopentenyl diphosphate biosynthesis via DXP pathway; isopentenyl diphosphate from 1-deoxy-D-xylulose 5-phosphate: step 2/6. It participates in isoprenoid biosynthesis; isopentenyl diphosphate biosynthesis via DXP pathway; isopentenyl diphosphate from 1-deoxy-D-xylulose 5-phosphate: step 4/6. Its function is as follows. Bifunctional enzyme that catalyzes the formation of 4-diphosphocytidyl-2-C-methyl-D-erythritol from CTP and 2-C-methyl-D-erythritol 4-phosphate (MEP) (IspD), and catalyzes the conversion of 4-diphosphocytidyl-2-C-methyl-D-erythritol 2-phosphate (CDP-ME2P) to 2-C-methyl-D-erythritol 2,4-cyclodiphosphate (ME-CPP) with a corresponding release of cytidine 5-monophosphate (CMP) (IspF). The protein is Bifunctional enzyme IspD/IspF of Rhodopseudomonas palustris (strain BisB5).